The primary structure comprises 116 residues: MSLSSLLKVVTASLWLGPGIAQKITQTQPGMFVQEKEAVTLDCTYDTSDPSYGLFWYKQPSSGEMIFLIYQGSYDQQNATEGRYSLNFQKARKSANLVISASQLGDSAMYFCAMRE.

Positions 1–21 (MSLSSLLKVVTASLWLGPGIA) are cleaved as a signal peptide. An Ig-like domain is found at 22–116 (QKITQTQPGM…SAMYFCAMRE (95 aa)). Cysteines 43 and 112 form a disulfide. Asn-78 carries N-linked (GlcNAc...) asparagine glycosylation.

In terms of assembly, alpha-beta TR is a heterodimer composed of an alpha and beta chain; disulfide-linked. The alpha-beta TR is associated with the transmembrane signaling CD3 coreceptor proteins to form the TR-CD3 (TcR or TCR). The assembly of alpha-beta TR heterodimers with CD3 occurs in the endoplasmic reticulum where a single alpha-beta TR heterodimer associates with one CD3D-CD3E heterodimer, one CD3G-CD3E heterodimer and one CD247 homodimer forming a stable octameric structure. CD3D-CD3E and CD3G-CD3E heterodimers preferentially associate with TR alpha and TR beta chains, respectively. The association of the CD247 homodimer is the last step of TcR assembly in the endoplasmic reticulum and is required for transport to the cell surface.

The protein resides in the cell membrane. V region of the variable domain of T cell receptor (TR) alpha chain that participates in the antigen recognition. Alpha-beta T cell receptors are antigen specific receptors which are essential to the immune response and are present on the cell surface of T lymphocytes. Recognize peptide-major histocompatibility (MH) (pMH) complexes that are displayed by antigen presenting cells (APC), a prerequisite for efficient T cell adaptive immunity against pathogens. Binding of alpha-beta TR to pMH complex initiates TR-CD3 clustering on the cell surface and intracellular activation of LCK that phosphorylates the ITAM motifs of CD3G, CD3D, CD3E and CD247 enabling the recruitment of ZAP70. In turn ZAP70 phosphorylates LAT, which recruits numerous signaling molecules to form the LAT signalosome. The LAT signalosome propagates signal branching to three major signaling pathways, the calcium, the mitogen-activated protein kinase (MAPK) kinase and the nuclear factor NF-kappa-B (NF-kB) pathways, leading to the mobilization of transcription factors that are critical for gene expression and essential for T cell growth and differentiation. The T cell repertoire is generated in the thymus, by V-(D)-J rearrangement. This repertoire is then shaped by intrathymic selection events to generate a peripheral T cell pool of self-MH restricted, non-autoaggressive T cells. Post-thymic interaction of alpha-beta TR with the pMH complexes shapes TR structural and functional avidity. The sequence is that of T cell receptor alpha variable 14/delta variable 4 from Homo sapiens (Human).